The primary structure comprises 104 residues: COX assembly mitochondrial protein 1 (104 aa).

Residues 10–52 (QKQCADLIRALEECHKSFGKFFGECNTIKYELKACLTKDRNDK) form the CHCH domain. Short sequence motifs (cx9C motif) lie at residues 13-23 (CADLIRALEEC) and 34-44 (CNTIKYELKAC). 2 cysteine pairs are disulfide-bonded: Cys-13/Cys-44 and Cys-23/Cys-34.

Belongs to the CMC family.

It localises to the mitochondrion inner membrane. Functionally, required for mitochondrial cytochrome c oxidase (COX) assembly and respiration. This Schizosaccharomyces pombe (strain 972 / ATCC 24843) (Fission yeast) protein is COX assembly mitochondrial protein 1 (cmc1).